A 505-amino-acid polypeptide reads, in one-letter code: Lysine--tRNA ligase (505 aa).

Mg(2+) is bound by residues Glu415 and Glu422.

It belongs to the class-II aminoacyl-tRNA synthetase family. In terms of assembly, homodimer. Mg(2+) serves as cofactor.

The protein localises to the cytoplasm. It catalyses the reaction tRNA(Lys) + L-lysine + ATP = L-lysyl-tRNA(Lys) + AMP + diphosphate. In Salmonella typhimurium (strain LT2 / SGSC1412 / ATCC 700720), this protein is Lysine--tRNA ligase (lysS).